The sequence spans 341 residues: Anthranilate phosphoribosyltransferase (341 aa).

5-phospho-alpha-D-ribose 1-diphosphate is bound by residues Gly-83, Ser-91, 93–96, 111–115, and Ser-123; these read NTST and KHGNR. An anthranilate-binding site is contributed by Gly-83. Ser-95 is a binding site for Mg(2+). Asn-114 lines the anthranilate pocket. Position 169 (Arg-169) interacts with anthranilate. Mg(2+)-binding residues include Asp-228 and Glu-229.

Belongs to the anthranilate phosphoribosyltransferase family. As to quaternary structure, homodimer. The cofactor is Mg(2+).

The catalysed reaction is N-(5-phospho-beta-D-ribosyl)anthranilate + diphosphate = 5-phospho-alpha-D-ribose 1-diphosphate + anthranilate. It participates in amino-acid biosynthesis; L-tryptophan biosynthesis; L-tryptophan from chorismate: step 2/5. Catalyzes the transfer of the phosphoribosyl group of 5-phosphorylribose-1-pyrophosphate (PRPP) to anthranilate to yield N-(5'-phosphoribosyl)-anthranilate (PRA). The sequence is that of Anthranilate phosphoribosyltransferase from Hyphomonas neptunium (strain ATCC 15444).